The chain runs to 915 residues: Copper-exporting P-type ATPase (915 aa).

HMA domains follow at residues 11-72 (NHFA…YQGG) and 73-134 (TEQT…YQAI). Cys22, Cys25, Cys84, and Cys87 together coordinate Cu(+). Residues 142–169 (FAPAASIDEKETDTPDAENSSNTEATEA) form a disordered region. Polar residues predominate over residues 158–169 (AENSSNTEATEA). Residues 172 to 236 (QTLSLLIKGM…AIQSSGYQAE (65 aa)) form the HMA 3 domain. 2 residues coordinate Cu(+): Cys183 and Cys186. Helical transmembrane passes span 265 to 285 (LGIALGTPLMLWGVFGGNMMI), 293 to 313 (VWGGIGTICFALLLTAGRHFF), 329 to 349 (TLVALGTGAAWFYSMLVVAWP), 359 to 379 (VYFEATAMIIGLISLGHYIET), 474 to 494 (LVITATGIGAQTMLARIIQMV), 514 to 534 (VFVPVVVVIAILSAALWYLYG), and 541 to 561 (YMLVVATTVLIIACPCALGLA). The 4-aspartylphosphate intermediate role is filled by Asp598. Mg(2+) contacts are provided by Asp796 and Asp800. 2 helical membrane-spanning segments follow: residues 801–821 (APALALADIGIAMGSGSDVAI) and 865–885 (IPIAAGVLYPAFGFLLSPVVA).

Belongs to the cation transport ATPase (P-type) (TC 3.A.3) family. Type IB subfamily.

The protein localises to the cell membrane. It carries out the reaction Cu(+)(in) + ATP + H2O = Cu(+)(out) + ADP + phosphate + H(+). Functionally, involved in copper export. The sequence is that of Copper-exporting P-type ATPase (copA) from Vibrio cholerae serotype O1 (strain ATCC 39315 / El Tor Inaba N16961).